A 405-amino-acid chain; its full sequence is Threonine synthase (405 aa).

An N6-(pyridoxal phosphate)lysine modification is found at lysine 106. Pyridoxal 5'-phosphate-binding positions include asparagine 132, glycine 233–asparagine 237, and threonine 371.

It belongs to the threonine synthase family. Pyridoxal 5'-phosphate is required as a cofactor.

The catalysed reaction is O-phospho-L-homoserine + H2O = L-threonine + phosphate. It participates in amino-acid biosynthesis; L-threonine biosynthesis; L-threonine from L-aspartate: step 5/5. Its function is as follows. Catalyzes the gamma-elimination of phosphate from L-phosphohomoserine and the beta-addition of water to produce L-threonine. The protein is Threonine synthase (thrC) of Methanocaldococcus jannaschii (strain ATCC 43067 / DSM 2661 / JAL-1 / JCM 10045 / NBRC 100440) (Methanococcus jannaschii).